Consider the following 97-residue polypeptide: Putative septation protein SpoVG (97 aa).

It belongs to the SpoVG family.

Functionally, could be involved in septation. The chain is Putative septation protein SpoVG from Anaeromyxobacter sp. (strain Fw109-5).